Reading from the N-terminus, the 718-residue chain is DNA ligase (718 aa).

NAD(+) is bound by residues 34–38 (DAEYD), 83–84 (SL), and Glu-115. Catalysis depends on Lys-117, which acts as the N6-AMP-lysine intermediate. 4 residues coordinate NAD(+): Arg-138, Glu-186, Lys-302, and Lys-326. Zn(2+) is bound by residues Cys-420, Cys-423, Cys-438, and Cys-444. The 91-residue stretch at 604–694 (PKGDALAGKT…DRSAPAASNN (91 aa)) folds into the BRCT domain.

Belongs to the NAD-dependent DNA ligase family. LigA subfamily. Mg(2+) serves as cofactor. Requires Mn(2+) as cofactor.

It catalyses the reaction NAD(+) + (deoxyribonucleotide)n-3'-hydroxyl + 5'-phospho-(deoxyribonucleotide)m = (deoxyribonucleotide)n+m + AMP + beta-nicotinamide D-nucleotide.. Its function is as follows. DNA ligase that catalyzes the formation of phosphodiester linkages between 5'-phosphoryl and 3'-hydroxyl groups in double-stranded DNA using NAD as a coenzyme and as the energy source for the reaction. It is essential for DNA replication and repair of damaged DNA. The sequence is that of DNA ligase from Roseiflexus castenholzii (strain DSM 13941 / HLO8).